Consider the following 357-residue polypeptide: Protein-glutamate methylesterase/protein-glutamine glutaminase 1 (357 aa).

The region spanning Lys-7 to Thr-124 is the Response regulatory domain. 4-aspartylphosphate is present on Asp-58. Positions Leu-158–Phe-350 constitute a CheB-type methylesterase domain. Catalysis depends on residues Ser-170, His-196, and Asp-292.

It belongs to the CheB family. In terms of processing, phosphorylated by CheA. Phosphorylation of the N-terminal regulatory domain activates the methylesterase activity.

The protein resides in the cytoplasm. It carries out the reaction [protein]-L-glutamate 5-O-methyl ester + H2O = L-glutamyl-[protein] + methanol + H(+). It catalyses the reaction L-glutaminyl-[protein] + H2O = L-glutamyl-[protein] + NH4(+). Involved in chemotaxis. Part of a chemotaxis signal transduction system that modulates chemotaxis in response to various stimuli. Catalyzes the demethylation of specific methylglutamate residues introduced into the chemoreceptors (methyl-accepting chemotaxis proteins or MCP) by CheR. Also mediates the irreversible deamidation of specific glutamine residues to glutamic acid. The polypeptide is Protein-glutamate methylesterase/protein-glutamine glutaminase 1 (Cupriavidus metallidurans (strain ATCC 43123 / DSM 2839 / NBRC 102507 / CH34) (Ralstonia metallidurans)).